A 57-amino-acid polypeptide reads, in one-letter code: Large ribosomal subunit protein bL32 (57 aa).

It belongs to the bacterial ribosomal protein bL32 family.

The chain is Large ribosomal subunit protein bL32 from Bacillus licheniformis (strain ATCC 14580 / DSM 13 / JCM 2505 / CCUG 7422 / NBRC 12200 / NCIMB 9375 / NCTC 10341 / NRRL NRS-1264 / Gibson 46).